A 143-amino-acid chain; its full sequence is Cofilin (143 aa).

Ser-4 is modified (phosphoserine). The ADF-H domain maps to Gly-5–Ser-137.

The protein belongs to the actin-binding proteins ADF family. As to quaternary structure, interacts with actin and AIP1 in a ternary complex. In terms of processing, the N-terminus is blocked.

The protein resides in the cytoplasm. Its subcellular location is the cytoskeleton. It is found in the nucleus matrix. Functionally, controls reversibly actin polymerization and depolymerization in a pH-sensitive manner. It has the ability to bind G- and F-actin in a 1:1 ratio of cofilin to actin. Binding to F-actin is regulated by tropomyosin. It is the major component of intranuclear and cytoplasmic actin rods. Required for accumulation of actin at the cell division site via depolymerizing actin at the cell ends. In association with myosin II has a role in the assembly of the contractile ring via severing actin filaments. Involved in the maintenance of the contractile ring once formed. In association with profilin and capping protein, has a role in the mitotic reorganization of the actin cytoskeleton. In effect, yeast cofilin increases the rate of actin polymerization by making new ends available for actin subunit addition. Such a protein complex is important for the polarized growth of yeast cells. This Saccharomyces cerevisiae (strain ATCC 204508 / S288c) (Baker's yeast) protein is Cofilin (COF1).